Consider the following 185-residue polypeptide: MRKDAKENRQRIEEIAHKLFDEEGVENISMNRIAKELGIGMGTLYRHFKDKSDLCYYVIQRDLDIFITHFKQIKDDYHSNYEVMQVSLDYLLQFKIDNKALLQCIEAGNNKLRFYQSAFYQELFDFYYDLFKSDDDTYTKFKTDMLLQSLSTSVFAFQIEHRHISIEAYRNYLLNIYLDEVERND.

An HTH tetR-type domain is found at Lys6–Phe66. Positions Ser29–Phe48 form a DNA-binding region, H-T-H motif.

This is HTH-type transcriptional regulator SA2364 from Staphylococcus aureus (strain N315).